A 278-amino-acid polypeptide reads, in one-letter code: UPF0758 protein BURPS1106A_0984 (278 aa).

The interval 1-64 (MQYEIVSAGE…ATAAARRGRD (64 aa)) is disordered. The span at 22–59 (AAAPAAPSSAVPSSAALSSAALSSAAQPTGAPPATAAA) shows a compositional bias: low complexity. Positions 156–278 (LVDSPGAVDD…TFSFAQAGWI (123 aa)) constitute an MPN domain. The Zn(2+) site is built by His-227, His-229, and Asp-240. Positions 227 to 240 (HNHPSGAVRPSAAD) match the JAMM motif motif.

Belongs to the UPF0758 family.

This chain is UPF0758 protein BURPS1106A_0984, found in Burkholderia pseudomallei (strain 1106a).